The following is a 327-amino-acid chain: Zinc transport protein ZntB (327 aa).

Topologically, residues 1–271 are cytoplasmic; sequence METIYGSSLK…AMNRRTYTMS (271 aa). The chain crosses the membrane as a helical span at residues 272-292; the sequence is LLAMIFLPTTFLTGLFGVNLG. The Periplasmic portion of the chain corresponds to 293–300; it reads GIPGNEYY. A helical transmembrane segment spans residues 301–321; the sequence is LGFAIFCLLLFGLVLFVAWWL. The Cytoplasmic portion of the chain corresponds to 322 to 327; it reads KKSKWL.

Belongs to the CorA metal ion transporter (MIT) (TC 1.A.35) family.

It is found in the cell inner membrane. The enzyme catalyses Zn(2+)(out) + H(+)(out) = Zn(2+)(in) + H(+)(in). Functionally, zinc transporter. Acts as a Zn(2+):proton symporter, which likely mediates zinc ion uptake. This Photorhabdus laumondii subsp. laumondii (strain DSM 15139 / CIP 105565 / TT01) (Photorhabdus luminescens subsp. laumondii) protein is Zinc transport protein ZntB.